The primary structure comprises 532 residues: Type 2 DNA topoisomerase 6 subunit B (532 aa).

Residues Asn41, Asp75, 96 to 97, 105 to 112, and Lys427 contribute to the ATP site; these read SK and GMYGLGVK.

Belongs to the TOP6B family. In terms of assembly, homodimer. Heterotetramer of two Top6A and two Top6B chains.

It catalyses the reaction ATP-dependent breakage, passage and rejoining of double-stranded DNA.. In terms of biological role, relaxes both positive and negative superturns and exhibits a strong decatenase activity. The polypeptide is Type 2 DNA topoisomerase 6 subunit B (Sulfurisphaera tokodaii (strain DSM 16993 / JCM 10545 / NBRC 100140 / 7) (Sulfolobus tokodaii)).